Here is a 1361-residue protein sequence, read N- to C-terminus: MAYSYTEKKRIRKDFGKLPDVMEVPYLLAIQLDSYRKFTQADTPFDQRKDMGLHAAFKSIFPIVSYSGNAALEYVSYALGKPVFDVKECVLRGATYAVPLRVKVRLIIYDKDSSSKAIKDIKEQEVYMGEIPLMTDNGTFVVNGTERVIVSQLHRSPGVFFEHDKGKTHSSGKLLYSARVIPYRGSWLDFEFDPKDLVFVRIDRRRKLPASILLRALGYTTEQMLDMFYETSKFGLTETGECVLELVPSRLRGDVTTFEIKDKDGNLIVEDGRRITARHIRQLEKAGVTELSVPHEYMVGRALAKDIINAESGEVLFECNTEITDEVLAELVKSGVKEFETLYTNELDCGPFISDTLRSDPARTQLEALVEIYRMMRPGEPPTKESAETLFQNLFFSSERYDLSAVGRMKFNRRLGRDSEVGSGTLSNEDIVDVLKTLIDIRNGKGVVDDIDHLGNRRVRSVGEMAENQFRVGLVRVERAVKERLSMAESEGLMPQDLINAKPVAAAVKEFFGSSQLSQFMDQNNPLSEVTHKRRVSALGPGGLTRERAGFEVRDVHPTHYGRVCPIETPEGPNIGLINSLATYARTNSYGFLESPHRKVVDGKVTDEIEYLSAINEAKFVIAQASAAQNENGELTEELVSVRFQNEFTLKGPSEVQYMDVSPRQVVSVAASLIPFLEHDDANRALMGSNMQRQAVPTLKAQKPLVGTGMERNVAADSGVCVVAKRGGVIERVDAARIVVRVADDEVEAGEAGVDIYNLTKYTRSNQNTCINQRSIVRTGEKVSRGDILADGPSVDLGELALGQNMRIAFMPWNGYNFEDSILVSERVVQEDRFTTIHIQELTCIARDTKLGSEEITADIPNVGEGALSKLDESGIVYVGAEVASGDILVGKVTPKGETQLTPEEKLLRAIFGEKASDVKDTSLRVPSSVKGTVIDVQVFTRDGLEKDQRSRDIEKAQLDQIRKDLNEEYRIVQGATFERLRAALVGNTAMTGKGVVKGQPVTDEMLDELSHDDWFKIRMNDDVLNEQIDAAEVALAERRKELDDRFEDKKGKLETGDDLAPGVLKIVKVYLAIKRRIQPGDKMAGRHGNKGVISVIMPVEDMPYDENGNPIDIVLNPLGVPSRMNVGQVLEMHLGLAAKSLGEKIDEMLKQQKAVAEIRQFLDQIYNQIGESYKAEELDTFSDDEIIELANNLRDGVPMATRAFDGAKEKEIKQLLTLGGMPDSGQMTLFDGRTGDPFQRPTTVGYMYMLKLNHLVDDKMHARSTGSYSLVTQQPLGGKAQFGGQRFGEMEVWALEAYGAAYTLQEMLTVKSDDVAGRTKMYKNIVDGDHRMEPGMPESFNVLVKEIRSLGINIELEQDN.

Belongs to the RNA polymerase beta chain family. The RNAP catalytic core consists of 2 alpha, 1 beta, 1 beta' and 1 omega subunit. When a sigma factor is associated with the core the holoenzyme is formed, which can initiate transcription.

It carries out the reaction RNA(n) + a ribonucleoside 5'-triphosphate = RNA(n+1) + diphosphate. Its function is as follows. DNA-dependent RNA polymerase catalyzes the transcription of DNA into RNA using the four ribonucleoside triphosphates as substrates. The polypeptide is DNA-directed RNA polymerase subunit beta (Saccharophagus degradans (strain 2-40 / ATCC 43961 / DSM 17024)).